The following is a 430-amino-acid chain: Adenylosuccinate synthetase (430 aa).

Residues 12-18 (GDEGKGK) and 40-42 (GHT) contribute to the GTP site. The active-site Proton acceptor is the aspartate 13. Mg(2+) is bound by residues aspartate 13 and glycine 40. Residues 13–16 (DEGK), 38–41 (NAGH), threonine 128, arginine 142, glutamine 223, threonine 238, and arginine 302 contribute to the IMP site. Histidine 41 functions as the Proton donor in the catalytic mechanism. Substrate is bound at residue 298-304 (TTTGRPR). GTP-binding positions include arginine 304, 330–332 (SID), and 412–414 (SVG).

It belongs to the adenylosuccinate synthetase family. As to quaternary structure, homodimer. Mg(2+) is required as a cofactor.

Its subcellular location is the cytoplasm. The enzyme catalyses IMP + L-aspartate + GTP = N(6)-(1,2-dicarboxyethyl)-AMP + GDP + phosphate + 2 H(+). It functions in the pathway purine metabolism; AMP biosynthesis via de novo pathway; AMP from IMP: step 1/2. Plays an important role in the de novo pathway of purine nucleotide biosynthesis. Catalyzes the first committed step in the biosynthesis of AMP from IMP. This is Adenylosuccinate synthetase from Streptococcus agalactiae serotype Ia (strain ATCC 27591 / A909 / CDC SS700).